Consider the following 75-residue polypeptide: Defensin-like protein 58 (75 aa).

Positions 1 to 23 (MNITKRYVVIFFLVMLTKSLSNS) are cleaved as a signal peptide. Disulfide bonds link Cys-39/Cys-73, Cys-43/Cys-66, Cys-52/Cys-71, and Cys-56/Cys-72.

This sequence belongs to the DEFL family.

The protein resides in the secreted. In Arabidopsis thaliana (Mouse-ear cress), this protein is Defensin-like protein 58.